The following is a 125-amino-acid chain: uncharacterized protein (125 aa).

This sequence belongs to the anhydro-N-acetylmuramic acid kinase family.

This is an uncharacterized protein from Yersinia enterocolitica.